A 194-amino-acid chain; its full sequence is Probable thymidylate kinase (194 aa).

9–16 (GIDGVGKS) is an ATP binding site.

It belongs to the thymidylate kinase family.

It catalyses the reaction dTMP + ATP = dTDP + ADP. In Methanopyrus kandleri (strain AV19 / DSM 6324 / JCM 9639 / NBRC 100938), this protein is Probable thymidylate kinase.